The primary structure comprises 263 residues: Endonuclease 8 (263 aa).

Residue P2 is the Schiff-base intermediate with DNA of the active site. E3 serves as the catalytic Proton donor. K53 functions as the Proton donor; for beta-elimination activity in the catalytic mechanism. Positions 70, 125, and 169 each coordinate DNA. An FPG-type zinc finger spans residues 229–263; the sequence is KVFHRDGEACERCGGIIEKTTLSSRPFYWCPHCQK. The Proton donor; for delta-elimination activity role is filled by R253.

This sequence belongs to the FPG family. The cofactor is Zn(2+).

The enzyme catalyses 2'-deoxyribonucleotide-(2'-deoxyribose 5'-phosphate)-2'-deoxyribonucleotide-DNA = a 3'-end 2'-deoxyribonucleotide-(2,3-dehydro-2,3-deoxyribose 5'-phosphate)-DNA + a 5'-end 5'-phospho-2'-deoxyribonucleoside-DNA + H(+). Functionally, involved in base excision repair of DNA damaged by oxidation or by mutagenic agents. Acts as a DNA glycosylase that recognizes and removes damaged bases. Has a preference for oxidized pyrimidines, such as thymine glycol, 5,6-dihydrouracil and 5,6-dihydrothymine. Has AP (apurinic/apyrimidinic) lyase activity and introduces nicks in the DNA strand. Cleaves the DNA backbone by beta-delta elimination to generate a single-strand break at the site of the removed base with both 3'- and 5'-phosphates. The chain is Endonuclease 8 from Salmonella schwarzengrund (strain CVM19633).